The following is a 260-amino-acid chain: 1-(5-phosphoribosyl)-5-[(5-phosphoribosylamino)methylideneamino] imidazole-4-carboxamide isomerase (260 aa).

Aspartate 8 acts as the Proton acceptor in catalysis. The Proton donor role is filled by aspartate 130.

This sequence belongs to the HisA/HisF family.

The protein localises to the cytoplasm. It carries out the reaction 1-(5-phospho-beta-D-ribosyl)-5-[(5-phospho-beta-D-ribosylamino)methylideneamino]imidazole-4-carboxamide = 5-[(5-phospho-1-deoxy-D-ribulos-1-ylimino)methylamino]-1-(5-phospho-beta-D-ribosyl)imidazole-4-carboxamide. It participates in amino-acid biosynthesis; L-histidine biosynthesis; L-histidine from 5-phospho-alpha-D-ribose 1-diphosphate: step 4/9. The chain is 1-(5-phosphoribosyl)-5-[(5-phosphoribosylamino)methylideneamino] imidazole-4-carboxamide isomerase from Chlorobium phaeobacteroides (strain BS1).